The sequence spans 206 residues: Ras-related protein O-RAL (206 aa).

21–28 (GSGGVGKS) is a binding site for GTP. The Effector region motif lies at 43–51 (YEPTKADSY). Residues 68 to 72 (DTAGQ) and 128 to 131 (NKSD) each bind GTP. Basic and acidic residues predominate over residues 180–189 (KMSENKDKNG). Positions 180-206 (KMSENKDKNGKKSSRNKKSLRERCCIL) are disordered. Cys-203 carries the post-translational modification Cysteine methyl ester. Residue Cys-203 is the site of S-geranylgeranyl cysteine attachment. A propeptide spans 204 to 206 (CIL) (removed in mature form).

The protein belongs to the small GTPase superfamily. Ras family.

Its subcellular location is the cell membrane. The enzyme catalyses GTP + H2O = GDP + phosphate + H(+). This chain is Ras-related protein O-RAL, found in Diplobatis ommata (Ocellated electric ray).